The sequence spans 3410 residues: Genome polyprotein (3410 aa).

Residues 1–103 lie on the Cytoplasmic side of the membrane; that stretch reads MTKKPGRPGR…DFVHLPKKKS (103 aa). Residues 2–15 form an interaction with host EXOC1 region; the sequence is TKKPGRPGRNRAVN. The hydrophobic; homodimerization of capsid protein C stretch occupies residues 38-73; that stretch reads LLDGRGPLRMVLAILAFFRFTALKPTAGLLKRWGMM. Residues 103-119 constitute a propeptide, ER anchor for the capsid protein C, removed in mature form by serine protease NS3; that stretch reads SGVSIIGRMLVFSFTAA. Residues 104–124 form a helical membrane-spanning segment; it reads GVSIIGRMLVFSFTAAVRVTL. Over 125-245 the chain is Extracellular; sequence ENGMSLMKIQ…ATSYLTKAES (121 aa). Residues 246–266 form a helical membrane-spanning segment; sequence WALRNPGYALVAAVLGWSLGT. The Cytoplasmic portion of the chain corresponds to 267–271; it reads SNAQK. The helical transmembrane segment at 272 to 286 threads the bilayer; it reads VIFTVMILLIAPAYS. The Extracellular portion of the chain corresponds to 287–739; sequence IRCVGVENRD…QIFGGMFRTL (453 aa). 6 cysteine pairs are disulfide-bonded: C289-C316, C346-C402, C346-C407, C360-C391, C378-C402, and C378-C407. A fusion peptide region spans residues 384–397; that stretch reads DRGWGNGCGLFGKG. N-linked (GlcNAc...) asparagine; by host glycosylation is present at N440. Disulfide bonds link C476/C574 and C591/C622. A helical transmembrane segment spans residues 740-760; it reads FGGMSWFTQIMIGALCCWLGI. Over 761-766 the chain is Cytoplasmic; the sequence is NARDRT. A helical membrane pass occupies residues 767–787; the sequence is IAVTFLAVGGVLVFLATSVNA. At 788-1165 the chain is on the extracellular side; that stretch reads DSGCALDLKR…IALQEVMRKR (378 aa). Intrachain disulfides connect C791/C802, C842/C928, C964/C1009, C1066/C1115, C1077/C1098, C1077/C1099, C1098/C1102, and C1099/C1102. N915 carries N-linked (GlcNAc...) asparagine; by host glycosylation. Residues 1166 to 1186 form a helical membrane-spanning segment; the sequence is ILGRHITWMVIAVFMAMILGG. The Cytoplasmic segment spans residues 1187–1214; sequence LSYRDLGRYLVLVGAAFAERNSGGDLLH. The helical transmembrane segment at 1215-1235 threads the bilayer; that stretch reads LVLVATFKVKPMALLGFVLGG. The Lumenal segment spans residues 1236–1242; it reads RWCRRQS. The helical transmembrane segment at 1243 to 1263 threads the bilayer; that stretch reads LLLSIGAVLVNFALEFQGGYF. Over 1264 to 1284 the chain is Cytoplasmic; the sequence is ELVDSLALALLFVKAVVQTDT. Residues 1285–1305 form a helical membrane-spanning segment; sequence TSVSLPLLAALAPAGCYTVLG. The Lumenal portion of the chain corresponds to 1306–1335; sequence THRFIMLTLVLVTFLGCKKTASVKKAGTAA. Residues 1336-1356 traverse the membrane as a helical segment; the sequence is VGVVLGMVGMKTIPMLGMLMV. The Cytoplasmic segment spans residues 1357-1363; sequence TSRARRS. The helical transmembrane segment at 1364 to 1384 threads the bilayer; the sequence is WPLHEAMAAVGILCALFGALA. Topologically, residues 1385–1387 are lumenal; the sequence is ETE. Residues 1388 to 1408 form a helical membrane-spanning segment; that stretch reads VDLAGPLAAAGLIVMAYVISG. Residues 1409 to 1464 are Cytoplasmic-facing; sequence RSNDLSIKKVEDVKWSDEAEVTGESVSYHVSLDVRGDPTLTEDSGPGLEKVLLKVG. The interacts with and activates NS3 protease stretch occupies residues 1415–1454; the sequence is IKKVEDVKWSDEAEVTGESVSYHVSLDVRGDPTLTEDSGP. Residues 1465–1485 constitute an intramembrane region (helical); the sequence is LMAISGIYPVAIPFALGAWFF. At 1486–2158 the chain is on the cytoplasmic side; it reads LEKRCKRAGA…KAALENSPEM (673 aa). Residues 1493–1670 form the Peptidase S7 domain; that stretch reads AGALWDIPSP…ENVGQEDGAE (178 aa). Active-site charge relay system; for serine protease NS3 activity residues include H1543, D1567, and S1627. The Helicase ATP-binding domain occupies 1673–1829; that stretch reads DNWFRKRELT…PSNSPIIDEE (157 aa). Residues 1677-1680 are important for RNA-binding; the sequence is RKRE. 1686 to 1693 serves as a coordination point for ATP; that stretch reads LHPGAGKT. The DEAH box motif lies at 1777 to 1780; sequence DEAH. Residues 1839 to 2006 enclose the Helicase C-terminal domain; sequence SGYEWIIEFD…QLYTPEREKT (168 aa). The residue at position 1881 (K1881) is an N6-acetyllysine; by host. A regulates the ATPase activity of NS3 helicase region spans residues 2153-2157; it reads ENSPE. The chain crosses the membrane as a helical span at residues 2159 to 2179; it reads IETFLLCALVCLMTIGLVVVL. The Lumenal portion of the chain corresponds to 2180-2185; it reads VRGKGP. Residues 2186–2205 constitute an intramembrane region (helical); it reads GKLAFGMVSIGVMTWLLWSA. G2206 is a topological domain (lumenal). Residues 2207-2227 form a helical membrane-spanning segment; sequence VDPGKIAAAVILVFLLLVVLI. Over 2228 to 2242 the chain is Cytoplasmic; it reads PEPEKQRSVQDNQLA. The helical transmembrane segment at 2243-2257 threads the bilayer; that stretch reads MLMLLIATILGGVAA. The Lumenal segment spans residues 2258–2293; sequence NEMGWLEKTKADLSWVVRGRSSTTTPVVELDMKPAT. Residues 2294-2314 constitute an intramembrane region (helical); that stretch reads AWTLYALATTLLTPLFQHLIV. Residues 2315-2336 lie on the Lumenal side of the membrane; it reads TKYANISLMAIASQAGTLFSMD. Residues 2337–2357 traverse the membrane as a helical segment; it reads SGIPFSSIELSVPLLALGCWT. A topological domain (cytoplasmic) is located at residue Q2358. Residues 2359–2379 form a helical membrane-spanning segment; the sequence is ITPCSLILACVLLSTHYAILL. Residues 2380-2420 lie on the Lumenal side of the membrane; the sequence is PGMQAQAARDAQRRTAAGIMKNAVVDGIVATDIPPLDGAGP. Residues 2421 to 2441 form a helical membrane-spanning segment; the sequence is LTEKKLGQLLLFAAAVTGVVI. Residues 2442–3410 are Cytoplasmic-facing; the sequence is TRSPRSWSEL…EKRVEFRGVL (969 aa). Residues 2508–2773 enclose the mRNA cap 0-1 NS5-type MT domain; the sequence is GGGIGETLGE…DVNLSCGTRA (266 aa). S2563 lines the S-adenosyl-L-methionine pocket. At S2563 the chain carries Phosphoserine. K2568 acts as the For 2'-O-MTase activity in catalysis. 6 residues coordinate S-adenosyl-L-methionine: G2593, W2594, T2611, K2612, D2638, and V2639. D2653 functions as the For 2'-O-MTase activity in the catalytic mechanism. An S-adenosyl-L-methionine-binding site is contributed by I2654. Catalysis depends on for 2'-O-MTase activity residues K2690 and E2726. S-adenosyl-L-methionine is bound at residue Y2728. 4 residues coordinate Zn(2+): E2947, H2951, C2956, and C2959. The region spanning 3036-3187 is the RdRp catalytic domain; the sequence is GILYADDTAG…AAPDARFGAA (152 aa). Zn(2+)-binding residues include H3222, C3238, and C3356.

This sequence in the N-terminal section; belongs to the class I-like SAM-binding methyltransferase superfamily. mRNA cap 0-1 NS5-type methyltransferase family. As to quaternary structure, homodimer. Interacts (via N-terminus) with host EXOC1 (via C-terminus); this interaction results in EXOC1 degradation through the proteasome degradation pathway. In terms of assembly, forms heterodimers with envelope protein E in the endoplasmic reticulum and Golgi. Homodimer; in the endoplasmic reticulum and Golgi. Interacts with protein prM. Interacts with non-structural protein 1. As to quaternary structure, homodimer; Homohexamer when secreted. Interacts with envelope protein E. NS1 interacts with NS4B. Interacts with host complement protein CFH; this interaction leads to the degradation of C3. In terms of assembly, interacts (via N-terminus) with serine protease NS3. Forms a heterodimer with serine protease NS3. May form homooligomers. As to quaternary structure, forms a heterodimer with NS2B. Interacts with non-structural protein 2A (via N-terminus). Interacts with NS4B. Interacts with unphosphorylated RNA-directed RNA polymerase NS5; this interaction stimulates RNA-directed RNA polymerase NS5 guanylyltransferase activity. In terms of assembly, interacts with serine protease NS3. Homodimer. Interacts with host STAT2; this interaction inhibits the phosphorylation of the latter, and, when all viral proteins are present (polyprotein), targets STAT2 for degradation. Post-translationally, specific enzymatic cleavages in vivo yield mature proteins. Cleavages in the lumen of endoplasmic reticulum are performed by host signal peptidase, whereas cleavages in the cytoplasmic side are performed by serine protease NS3. Signal cleavage at the 2K-4B site requires a prior NS3 protease-mediated cleavage at the 4A-2K site. Cleaved in post-Golgi vesicles by a host furin, releasing the mature small envelope protein M, and peptide pr. This cleavage is incomplete as up to 30% of viral particles still carry uncleaved prM. In terms of processing, N-glycosylated. Post-translationally, N-glycosylated. The excreted form is glycosylated and this is required for efficient secretion of the protein from infected cells. Acetylated by host KAT5. Acetylation modulates NS3 RNA-binding and unwinding activities and plays an important positive role for viral replication. In terms of processing, phosphorylated on serines residues. This phosphorylation may trigger NS5 nuclear localization.

It is found in the virion. The protein resides in the host nucleus. The protein localises to the host cytoplasm. It localises to the host perinuclear region. Its subcellular location is the secreted. It is found in the virion membrane. The protein resides in the host endoplasmic reticulum membrane. The enzyme catalyses Selective hydrolysis of -Xaa-Xaa-|-Yaa- bonds in which each of the Xaa can be either Arg or Lys and Yaa can be either Ser or Ala.. It carries out the reaction RNA(n) + a ribonucleoside 5'-triphosphate = RNA(n+1) + diphosphate. The catalysed reaction is a ribonucleoside 5'-triphosphate + H2O = a ribonucleoside 5'-diphosphate + phosphate + H(+). It catalyses the reaction ATP + H2O = ADP + phosphate + H(+). The enzyme catalyses a 5'-end (5'-triphosphoguanosine)-ribonucleoside in mRNA + S-adenosyl-L-methionine = a 5'-end (N(7)-methyl 5'-triphosphoguanosine)-ribonucleoside in mRNA + S-adenosyl-L-homocysteine. It carries out the reaction a 5'-end (N(7)-methyl 5'-triphosphoguanosine)-ribonucleoside in mRNA + S-adenosyl-L-methionine = a 5'-end (N(7)-methyl 5'-triphosphoguanosine)-(2'-O-methyl-ribonucleoside) in mRNA + S-adenosyl-L-homocysteine + H(+). Functionally, plays a role in virus budding by binding to the cell membrane and gathering the viral RNA into a nucleocapsid that forms the core of a mature virus particle. During virus entry, may induce genome penetration into the host cytoplasm after hemifusion induced by the surface proteins. Can migrate to the cell nucleus where it modulates host functions. Overcomes the anti-viral effects of host EXOC1 by sequestering and degrading the latter through the proteasome degradation pathway. Its function is as follows. Inhibits RNA silencing by interfering with host Dicer. In terms of biological role, prevents premature fusion activity of envelope proteins in trans-Golgi by binding to envelope protein E at pH6.0. After virion release in extracellular space, gets dissociated from E dimers. Acts as a chaperone for envelope protein E during intracellular virion assembly by masking and inactivating envelope protein E fusion peptide. prM is the only viral peptide matured by host furin in the trans-Golgi network probably to avoid catastrophic activation of the viral fusion activity in acidic Golgi compartment prior to virion release. prM-E cleavage is inefficient, and many virions are only partially matured. These uncleaved prM would play a role in immune evasion. Functionally, may play a role in virus budding. Exerts cytotoxic effects by activating a mitochondrial apoptotic pathway through M ectodomain. May display a viroporin activity. Its function is as follows. Binds to host cell surface receptor and mediates fusion between viral and cellular membranes. Envelope protein is synthesized in the endoplasmic reticulum in the form of heterodimer with protein prM. They play a role in virion budding in the ER, and the newly formed immature particle is covered with 60 spikes composed of heterodimer between precursor prM and envelope protein E. The virion is transported to the Golgi apparatus where the low pH causes dissociation of PrM-E heterodimers and formation of E homodimers. prM-E cleavage is inefficient, and many virions are only partially matured. These uncleaved prM would play a role in immune evasion. In terms of biological role, involved in immune evasion, pathogenesis and viral replication. Once cleaved off the polyprotein, is targeted to three destinations: the viral replication cycle, the plasma membrane and the extracellular compartment. Essential for viral replication. Required for formation of the replication complex and recruitment of other non-structural proteins to the ER-derived membrane structures. Excreted as a hexameric lipoparticle that plays a role against host immune response. Antagonizing the complement function. Binds to the host macrophages and dendritic cells. Inhibits signal transduction originating from Toll-like receptor 3 (TLR3). Component of the viral RNA replication complex that functions in virion assembly and antagonizes the host alpha/beta interferon antiviral response. Functionally, required cofactor for the serine protease function of NS3. May have membrane-destabilizing activity and form viroporins. Its function is as follows. Displays three enzymatic activities: serine protease, NTPase and RNA helicase. NS3 serine protease, in association with NS2B, performs its autocleavage and cleaves the polyprotein at dibasic sites in the cytoplasm: C-prM, NS2A-NS2B, NS2B-NS3, NS3-NS4A, NS4A-2K and NS4B-NS5. NS3 RNA helicase binds RNA and unwinds dsRNA in the 3' to 5' direction. In terms of biological role, regulates the ATPase activity of the NS3 helicase activity. NS4A allows NS3 helicase to conserve energy during unwinding. Functions as a signal peptide for NS4B and is required for the interferon antagonism activity of the latter. Functionally, induces the formation of ER-derived membrane vesicles where the viral replication takes place. Inhibits interferon (IFN)-induced host STAT1 phosphorylation and nuclear translocation, thereby preventing the establishment of cellular antiviral state by blocking the IFN-alpha/beta pathway. Inhibits STAT2 translocation in the nucleus after IFN-alpha treatment. Its function is as follows. Replicates the viral (+) and (-) RNA genome, and performs the capping of genomes in the cytoplasm. NS5 methylates viral RNA cap at guanine N-7 and ribose 2'-O positions. Besides its role in RNA genome replication, also prevents the establishment of cellular antiviral state by blocking the interferon-alpha/beta (IFN-alpha/beta) signaling pathway. Inhibits host TYK2 and STAT2 phosphorylation, thereby preventing activation of JAK-STAT signaling pathway. This chain is Genome polyprotein, found in Kokobera virus (KOKV).